The primary structure comprises 647 residues: Threonine--tRNA ligase (647 aa).

A TGS domain is found at Met1–Thr61. Residues Asp242–Pro540 are catalytic. Residues Cys336, His387, and His517 each contribute to the Zn(2+) site.

The protein belongs to the class-II aminoacyl-tRNA synthetase family. As to quaternary structure, homodimer. Zn(2+) serves as cofactor.

Its subcellular location is the cytoplasm. It catalyses the reaction tRNA(Thr) + L-threonine + ATP = L-threonyl-tRNA(Thr) + AMP + diphosphate + H(+). Catalyzes the attachment of threonine to tRNA(Thr) in a two-step reaction: L-threonine is first activated by ATP to form Thr-AMP and then transferred to the acceptor end of tRNA(Thr). Also edits incorrectly charged L-seryl-tRNA(Thr). The protein is Threonine--tRNA ligase of Streptococcus pneumoniae serotype 4 (strain ATCC BAA-334 / TIGR4).